The sequence spans 794 residues: MTENITINMPEIVPLYPLREIIAFPYMVFTIFLKQEDMPPFEEAVLFNNLVALVKLREEPTGELFPALHEIGTLCKVMQINKLAGGGAKVVLEGVIRVRLLAIVQQTPVALSRLEPVREFAEKSMVSEALVGSLNALLKIALSYGRPLPDDVMKMIDFIDNPARLSDLVALYLNLPIDELQKLLETVDPLERLKKVYMHLTNEVQRLQIKGEVQAEVTKKVGKSQKEFLLREQMKQIQEELGEEDSRLGEANELRSKVESAHMPEDVRRIAEKEMRRLERINPASPEYTVSRTYLDYLTTIPWQVSTPDNRDINQAETILNEDHYDLKKVKERILEYLAVRSLKDKMKGPILCFVGPPGVGKTSLGKSIARTLGRKFIRISLGGMRDEAEIRGHRRTYIGALPGRIIQEINRAGSNNPVFMLDEVDKIGADFRGDPASALLEVLDPEQNFSFTDHYLDVPFDLTNVMFITTANQLDPIPAPLKDRMEVITLSGYTDEEKLNIAKSYLVAREVEENGLASMAPQFTDEAIYRVTHDYTREAGVRNLQRNIASICRKIAKEVAQGKKARPIVNPETVSELLGAPKFFDEVASEKDRVGVATGLAWTESGGDIIFVEATKMKGKEDLILTGSLGEVMKESVRAALSFVKANCAELGIDKKMFDETTLHIHVPAGSIPKDGPSAGITMATAIVSLFSGRAARRDVAMTGEMSLTGRVLAIGGLKEKVLAARRAGVKKVLAPAKNKKDLEDIPENVKNELEFFFVEDIREVFVQALNPTSPAPTAATSARTPAGAPPPQ.

One can recognise a Lon N-terminal domain in the interval 13–204 (VPLYPLREII…KVYMHLTNEV (192 aa)). Position 356 to 363 (356 to 363 (GPPGVGKT)) interacts with ATP. The Lon proteolytic domain occupies 592–773 (KDRVGVATGL…REVFVQALNP (182 aa)). Catalysis depends on residues Ser679 and Lys722. Residues 774-788 (TSPAPTAATSARTPA) show a composition bias toward low complexity. Positions 774–794 (TSPAPTAATSARTPAGAPPPQ) are disordered.

Belongs to the peptidase S16 family. As to quaternary structure, homohexamer. Organized in a ring with a central cavity.

It is found in the cytoplasm. It carries out the reaction Hydrolysis of proteins in presence of ATP.. In terms of biological role, ATP-dependent serine protease that mediates the selective degradation of mutant and abnormal proteins as well as certain short-lived regulatory proteins. Required for cellular homeostasis and for survival from DNA damage and developmental changes induced by stress. Degrades polypeptides processively to yield small peptide fragments that are 5 to 10 amino acids long. Binds to DNA in a double-stranded, site-specific manner. In Citrifermentans bemidjiense (strain ATCC BAA-1014 / DSM 16622 / JCM 12645 / Bem) (Geobacter bemidjiensis), this protein is Lon protease.